Reading from the N-terminus, the 219-residue chain is 2-C-methyl-D-erythritol 4-phosphate cytidylyltransferase (219 aa).

This sequence belongs to the IspD/TarI cytidylyltransferase family. IspD subfamily.

It catalyses the reaction 2-C-methyl-D-erythritol 4-phosphate + CTP + H(+) = 4-CDP-2-C-methyl-D-erythritol + diphosphate. The protein operates within isoprenoid biosynthesis; isopentenyl diphosphate biosynthesis via DXP pathway; isopentenyl diphosphate from 1-deoxy-D-xylulose 5-phosphate: step 2/6. Its function is as follows. Catalyzes the formation of 4-diphosphocytidyl-2-C-methyl-D-erythritol from CTP and 2-C-methyl-D-erythritol 4-phosphate (MEP). In Phocaeicola vulgatus (strain ATCC 8482 / DSM 1447 / JCM 5826 / CCUG 4940 / NBRC 14291 / NCTC 11154) (Bacteroides vulgatus), this protein is 2-C-methyl-D-erythritol 4-phosphate cytidylyltransferase.